A 155-amino-acid chain; its full sequence is Large ribosomal subunit protein uL13 (155 aa).

It belongs to the universal ribosomal protein uL13 family. As to quaternary structure, part of the 50S ribosomal subunit.

This protein is one of the early assembly proteins of the 50S ribosomal subunit, although it is not seen to bind rRNA by itself. It is important during the early stages of 50S assembly. This is Large ribosomal subunit protein uL13 from Rickettsia typhi (strain ATCC VR-144 / Wilmington).